A 366-amino-acid polypeptide reads, in one-letter code: MATSISLEDSITIFEKDQNSDVLMSWCFPTITEDLKSVILNRTSLLQEKISLQFSFSKFKNSWIYIYTTSVETQQINKEDGSITQINVPDSLKRVVAFSLVLVRNQFNPEKYGSLAQIMSSVYKQTGDCSKLLECQLRVFNRGQFDVGSMGKFVDSSFDVRRSYLQTSIKDIIQLFGEEIILIWSAMAMKKRIVVYSEKLSSLLKVIRALPLFVFHRQNWNILRPFVTISDLELKDLVSTGVYCAGFTDSSIKSREDLYDILVDLSSKEVSVSSQSKDQFILGSFHKDVLRFLLDSLDDEEITDQNVIKGLNLKMKELLTKLESLKETNEETGKSSITLESLETRKLPNGMSTFLFNIANAEGLNG.

Positions 1-147 (MATSISLEDS…RVFNRGQFDV (147 aa)) constitute a uDENN domain. In terms of domain architecture, cDENN spans 169–309 (IKDIIQLFGE…EEITDQNVIK (141 aa)). The dDENN domain maps to 311-366 (LNLKMKELLTKLESLKETNEETGKSSITLESLETRKLPNGMSTFLFNIANAEGLNG).

It belongs to the DENND10 family.

The protein localises to the late endosome. Guanine nucleotide exchange factor (GEF) which may be involved in the regulation of homeostasis of late endocytic pathway, including endosomal positioning, maturation and secretion. This Dictyostelium discoideum (Social amoeba) protein is DENN domain-containing protein 10 (dennd10).